Reading from the N-terminus, the 309-residue chain is Tumor necrosis factor ligand superfamily member 9 (309 aa).

A compositionally biased stretch (basic and acidic residues) spans 1-16; it reads MDQHTLDVEDTADARH. Positions 1-20 are disordered; the sequence is MDQHTLDVEDTADARHPAGT. Residues 1 to 82 lie on the Cytoplasmic side of the membrane; that stretch reads MDQHTLDVED…ALNFCSRHPK (82 aa). A helical; Signal-anchor for type II membrane protein transmembrane segment spans residues 83–103; it reads LYGLVALVLLLLIAACVPIFT. Residues 104–309 are Extracellular-facing; that stretch reads RTEPRPALTI…FLVKPDNPWE (206 aa). Asn-139, Asn-161, and Asn-293 each carry an N-linked (GlcNAc...) asparagine glycan. In terms of domain architecture, THD spans 147–302; that stretch reads VFAKLLAKNQ…NTTSFGLFLV (156 aa).

This sequence belongs to the tumor necrosis factor family. Homotrimer.

Its subcellular location is the membrane. Functionally, cytokine that binds to TNFRSF9. Induces the proliferation of activated peripheral blood T-cells. May have a role in activation-induced cell death (AICD). May play a role in cognate interactions between T-cells and B-cells/macrophages. The sequence is that of Tumor necrosis factor ligand superfamily member 9 (Tnfsf9) from Mus musculus (Mouse).